Consider the following 327-residue polypeptide: AA9 family lytic polysaccharide monooxygenase G (327 aa).

A signal peptide spans 1 to 20 (MKLNLASLCFLASIAPLVSG). Cu(2+) contacts are provided by His-21 and His-96. Cys-62 and Cys-185 are oxidised to a cystine. Residue His-172 participates in O2 binding. Residue Tyr-182 coordinates Cu(2+). A glycan (N-linked (GlcNAc...) asparagine) is linked at Asn-290. The CBM1 domain occupies 291–327 (GTIKKYYQCGGQGWTGSGSCEAGTSCREWNTWYFQCV).

The protein belongs to the polysaccharide monooxygenase AA9 family. Cu(2+) serves as cofactor.

It localises to the secreted. The enzyme catalyses [(1-&gt;4)-beta-D-glucosyl]n+m + reduced acceptor + O2 = 4-dehydro-beta-D-glucosyl-[(1-&gt;4)-beta-D-glucosyl]n-1 + [(1-&gt;4)-beta-D-glucosyl]m + acceptor + H2O.. In terms of biological role, lytic polysaccharide monooxygenase (LPMO) that depolymerizes crystalline and amorphous polysaccharides via the oxidation of scissile alpha- or beta-(1-4)-glycosidic bonds, yielding C1 or C4 oxidation products. Catalysis by LPMOs requires the reduction of the active-site copper from Cu(II) to Cu(I) by a reducing agent and H(2)O(2) or O(2) as a cosubstrate. The protein is AA9 family lytic polysaccharide monooxygenase G of Aspergillus tamarii.